Reading from the N-terminus, the 396-residue chain is Elongation factor Tu (396 aa).

The tr-type G domain maps to 10–206; sequence KPHVNVGTIG…ALDTYIPTPE (197 aa). The segment at 19-26 is G1; it reads GHVDHGKT. 19–26 lines the GTP pocket; the sequence is GHVDHGKT. Residue threonine 26 coordinates Mg(2+). Residues 60–64 form a G2 region; that stretch reads GITIN. Residues 81 to 84 are G3; it reads DCPG. GTP-binding positions include 81–85 and 136–139; these read DCPGH and NKCD. The interval 136–139 is G4; sequence NKCD. The tract at residues 174–176 is G5; it reads SAK.

This sequence belongs to the TRAFAC class translation factor GTPase superfamily. Classic translation factor GTPase family. EF-Tu/EF-1A subfamily. Monomer.

The protein resides in the cytoplasm. It carries out the reaction GTP + H2O = GDP + phosphate + H(+). Its function is as follows. GTP hydrolase that promotes the GTP-dependent binding of aminoacyl-tRNA to the A-site of ribosomes during protein biosynthesis. The sequence is that of Elongation factor Tu from Burkholderia cepacia (Pseudomonas cepacia).